The chain runs to 206 residues: dTTP/UTP pyrophosphatase (206 aa).

Residue Asp-79 is the Proton acceptor of the active site.

The protein belongs to the Maf family. YhdE subfamily. It depends on a divalent metal cation as a cofactor.

The protein localises to the cytoplasm. It catalyses the reaction dTTP + H2O = dTMP + diphosphate + H(+). The enzyme catalyses UTP + H2O = UMP + diphosphate + H(+). Its function is as follows. Nucleoside triphosphate pyrophosphatase that hydrolyzes dTTP and UTP. May have a dual role in cell division arrest and in preventing the incorporation of modified nucleotides into cellular nucleic acids. The sequence is that of dTTP/UTP pyrophosphatase from Rhizobium meliloti (strain 1021) (Ensifer meliloti).